Reading from the N-terminus, the 998-residue chain is Mis18-binding protein 1 (998 aa).

Lys-7 participates in a covalent cross-link: Glycyl lysine isopeptide (Lys-Gly) (interchain with G-Cter in SUMO2). 3 positions are modified to phosphoserine: Ser-9, Ser-109, and Ser-134. The segment at 122–153 (QRDKQEQLTRSSSMLGSPQGEHTKDFPPNTDK) is disordered. The span at 142-153 (EHTKDFPPNTDK) shows a compositional bias: basic and acidic residues. A phosphoserine mark is found at Ser-169 and Ser-258. The SANTA domain maps to 336–422 (VHLQEWMIKV…MFGFPHNWKE (87 aa)). Disordered regions lie at residues 438 to 460 (KTRQ…AEDK) and 476 to 502 (DNSL…KERR). Residues 488–497 (PLNSLEQPTS) are compositionally biased toward polar residues. Phosphothreonine is present on residues Thr-516 and Thr-578. A phosphoserine mark is found at Ser-638 and Ser-639. Positions 638-660 (SSEENEVEIKSRTRARNTKERLN) are disordered. Positions 644–660 (VEIKSRTRARNTKERLN) are enriched in basic and acidic residues. Thr-688 bears the Phosphothreonine mark. Lys-707 is covalently cross-linked (Glycyl lysine isopeptide (Lys-Gly) (interchain with G-Cter in SUMO2)). Ser-726 is modified (phosphoserine). In terms of domain architecture, SANT spans 741 to 796 (TDDEEWSEQELQKLHCAFTSLPKHKPGFWSDVAMAVGSRTADECQKKYTEEPQGQG). A Glycyl lysine isopeptide (Lys-Gly) (interchain with G-Cter in SUMO2) cross-link involves residue Lys-765. Residues 784–821 (CQKKYTEEPQGQGSRKHGSKKKQANKVQNGEKDSADAK) are disordered. Over residues 797–807 (SRKHGSKKKQA) the composition is skewed to basic residues. Positions 812–821 (NGEKDSADAK) are enriched in basic and acidic residues. Glycyl lysine isopeptide (Lys-Gly) (interchain with G-Cter in SUMO2) cross-links involve residues Lys-821, Lys-828, and Lys-847. Ser-872 is modified (phosphoserine). Lys-948 is covalently cross-linked (Glycyl lysine isopeptide (Lys-Gly) (interchain with G-Cter in SUMO2)). Phosphoserine occurs at positions 955 and 985. The segment at 976–998 (SKYFIDDTESDEEEKDYYFSNSD) is disordered. The segment covering 981–990 (DDTESDEEEK) has biased composition (acidic residues).

Interacts with SP1. Interacts with MIS18A. Identified in a complex containing MIS18A, OIP5/MIS18B, MIS18BP1, RBBP7 and RBBP4. Interacts with KAT7/HBO1. Interacts (via N-terminus) with FLNA (via N-terminus).

The protein localises to the nucleus. It localises to the chromosome. It is found in the centromere. In terms of biological role, required for recruitment of CENPA to centromeres and normal chromosome segregation during mitosis. The sequence is that of Mis18-binding protein 1 (Mis18bp1) from Mus musculus (Mouse).